The sequence spans 650 residues: Probable ATP-dependent RNA helicase DDX17 (650 aa).

Residues 1 to 38 (MRGGGFGDRDRDRDRGGFGARGGSGLPPKKFGNPGERL) form a disordered region. Residues 7 to 16 (GDRDRDRDRG) show a composition bias toward basic and acidic residues. 3 positions are modified to N6-acetyllysine: Lys29, Lys30, and Lys42. Lys50 participates in a covalent cross-link: Glycyl lysine isopeptide (Lys-Gly) (interchain with G-Cter in SUMO); alternate. Lys50 participates in a covalent cross-link: Glycyl lysine isopeptide (Lys-Gly) (interchain with G-Cter in SUMO1); alternate. Residue Lys50 forms a Glycyl lysine isopeptide (Lys-Gly) (interchain with G-Cter in SUMO2); alternate linkage. Positions 92–120 (FAFHHANFPQYVMDVLMDQHFTEPTPIQC) match the Q motif motif. Residues 123 to 298 (FPLALSGRDM…EDFLRDYTQI (176 aa)) form the Helicase ATP-binding domain. Position 136-143 (136-143 (AQTGSGKT)) interacts with ATP. The DEAD box signature appears at 246 to 249 (DEAD). Residues 326 to 473 (KLIQLMEEIM…AINPKLMQLV (148 aa)) form the Helicase C-terminal domain. Thr444 carries the post-translational modification Phosphothreonine. Lys449 participates in a covalent cross-link: Glycyl lysine isopeptide (Lys-Gly) (interchain with G-Cter in SUMO2). Residues 468–650 (KLMQLVDHRG…PPPPPPPSRK (183 aa)) are transactivation domain. Disordered regions lie at residues 472-543 (LVDH…YGSP) and 583-650 (ASST…PSRK). The span at 489–499 (RTTSSANNPNL) shows a compositional bias: polar residues. The span at 504-531 (ECDRRLRGVKDGGRRDSTSYRDRSETDR) shows a compositional bias: basic and acidic residues. Over residues 583-609 (ASSTASAGRSSQSSSQQFSGIGRSGQQ) the composition is skewed to low complexity. The residue at position 605 (Arg605) is an Omega-N-methylarginine. Residues 610–619 (PQPLMSQQFA) show a composition bias toward polar residues. Residues 638–650 (YPPPPPPPPPSRK) are compositionally biased toward pro residues. The interval 639–647 (PPPPPPPPP) is interaction with YAP1.

Belongs to the DEAD box helicase family. DDX5/DBP2 subfamily. As to quaternary structure, interacts with DDX5 in an RNA-independent manner. Interacts with CDK9 transcription elongation complex under basal conditions. Following cell stimulation with poly(I:C), a synthetic double-stranded RNA mimicking viral infection, the interaction with CDK9 is decreased. Interacts with ESR1 in an estrogen-independent manner. Interacts with HNRNPH1; this interaction is important for the regulation of alternative splicing on G-quadruplex structures. At high, but not low, cell density, interacts with DROSHA and DGCR8, the core components of the microprocessor complex involved in the maturation of primary microRNAs (pri-miRNAs) into pre-miRNAs. The interaction with DGCR8 is reduced during mitosis. At low, but not high, cell density, interacts with YAP1 and with its paralog, WWTR1/TAZ. Interactions with DROSHA and YAP1 are mutually exclusive. In vitro, the pre-miRNA processing activity of the DDX17-containing microprocessor complex is weaker than that of the DROSHA/DGCR8 microprocessor complex. Interacts with UPF3B. Interacts with NFAT5; this interaction leads to DDX17 recruitment to LNC2 and S100A4 promoters and NFAT5-mediated DDX17-enhanced transactivation. Interacts with HDAC1, HDAC2 and HDAC3; this interaction with HDAC1 and HDAC3, but not HDAC2, depends upon DDX17 acetylation. Interacts with ZC3HAV1 (via N-terminal domain) in an RNA-independent manner. Interacts with EXOSC3/RRP40 and EXOSC5/RRP46; this interaction may be indirect and mediated by ZC3HAV1-binding. Interacts with EP300; this interaction leads to acetylation at lysine residues. Interacts with CREBBP/CBP and KAT2B/P/CAF. Directly interacts with CTNNB1. Interacts with MYOD1. Interacts with TP53. Interacts with DCP1A in an RNA-independent manner. Interacts with DCP2 in an RNA-dependent manner. Interacts with DHX36; this interaction occurs in a RNA-dependent manner. Interacts with ERCC6. Sumoylation significantly increases stability. It also promotes interaction specifically with HDAC1 (but not HDAC2, nor HDAC3) and strongly stimulates ESR1 and TP53 coactivation. In terms of processing, acetylation at lysine residues stabilizes the protein, stimulates interaction with HDAC1 and HDAC3, but not HDAC2, and represses ESR1 and TP53 coactivation activity.

The protein localises to the nucleus. It localises to the nucleolus. The protein resides in the cytoplasm. It is found in the cytosol. The enzyme catalyses ATP + H2O = ADP + phosphate + H(+). In terms of biological role, as an RNA helicase, unwinds RNA and alters RNA structures through ATP binding and hydrolysis. Involved in multiple cellular processes, including pre-mRNA splicing, alternative splicing, ribosomal RNA processing and miRNA processing, as well as transcription regulation. Regulates the alternative splicing of exons exhibiting specific features. This function requires the RNA helicase activity. Affects NFAT5 and histone macro-H2A.1/MACROH2A1 alternative splicing in a CDK9-dependent manner. Affects splicing of mediators of steroid hormone signaling pathway, including kinases that phosphorylates ESR1 and transcriptional regulators. By acting splicing of regulatory factors, participates in ESR1 and AR stabilization. Promotes the inclusion of specific AC-rich alternative exons in CD44 transcripts. In myoblasts and epithelial cells, cooperates with HNRNPH1 to control the splicing of specific subsets of exons. In addition to binding mature mRNAs, also interacts with certain pri-microRNAs, including MIR132/miR-132, and stabilizes the primary transcript. Also participates in the MIR132 processing, resulting in significantly higher levels of mature MIR132 than MIR212 despite the fact that both are cotranscribed and co-regulated. Binding of pri-microRNAs may occur on the 3' segment flanking the stem loop via the 5'-[ACG]CAUC[ACU]-3' consensus sequence. Participates in MYC down-regulation at high cell density through the production of MYC-targeting microRNAs. Along with DDX5, may be involved in the processing of the 32S intermediate into the mature 28S rRNA. Promoter-specific transcription regulator, functioning as a coactivator or corepressor depending on the context of the promoter and the transcriptional complex in which it exists. Enhances NFAT5 transcriptional activity. Synergizes with TP53 in the activation of the MDM2 promoter; this activity requires acetylation on lysine residues. May also coactivate MDM2 transcription through a TP53-independent pathway. Coactivates MMP7 transcription. Along with CTNNB1, coactivates MYC, JUN, FOSL1 and cyclin D1/CCND1 transcription. Alone or in combination with DDX5 and/or SRA1 non-coding RNA, plays a critical role in promoting the assembly of proteins required for the formation of the transcription initiation complex and chromatin remodeling leading to coactivation of MYOD1-dependent transcription. This helicase-independent activity is required for skeletal muscle cells to properly differentiate into myotubes. During epithelial-to-mesenchymal transition, coregulates SMAD-dependent transcriptional activity, directly controlling key effectors of differentiation, including miRNAs which in turn directly repress its expression. Plays a role in estrogen and testosterone signaling pathway at several levels. Mediates the use of alternative promoters in estrogen-responsive genes and regulates transcription and splicing of a large number of steroid hormone target genes. Contrary to the splicing regulation activity, transcriptional coregulation of the estrogen receptor ESR1 is helicase activity-independent. Plays a role in innate immunity. Specifically restricts bunyavirus infection, including Rift Valley fever virus (RVFV) or La Crosse virus (LACV), but not vesicular stomatitis virus (VSV), in an interferon- and DROSHA-independent manner. Binds to RVFV RNA, likely via structured viral RNA elements. Promotes mRNA degradation mediated by the antiviral zinc-finger protein ZC3HAV1, in an ATPase-dependent manner. This Mus musculus (Mouse) protein is Probable ATP-dependent RNA helicase DDX17 (Ddx17).